Reading from the N-terminus, the 534-residue chain is Cytochrome P450 monooxygenase vrtK (534 aa).

Cys448 is a heme binding site.

It belongs to the cytochrome P450 family. The cofactor is heme.

It functions in the pathway secondary metabolite biosynthesis; terpenoid biosynthesis. Cytochrome P450 monooxygenase; part of the gene cluster that mediates the biosynthesis of viridicatumtoxin, a tetracycline-like fungal meroterpenoid with a unique, fused spirobicyclic ring system. The first step of the pathway is the production of the malonamoyl-CoA starter unit for the polyketide synthase vrtA. The aldolase vrtJ may be involved in the synthesis of the malonamate substrate for malonamoyl-CoA synthetase vrtB. The polyketide synthase vrtA then may utilize the malonamoyl-CoA starter unit, followed by sequential condensation of eight malonyl-CoA units to form the polyketide backbone. The cyclization of the last ring could be mediated by the lactamase-like protein vrtG. The proposed post-PKS tailoring steps are a hydroxylation at C5 catalyzed the cytochrome P450 monooxygenase vrtE, a hydroxylation at C12a catalyzed by VrtH and/or VrtI, and an O-methylation by the O-methyltransferase vrtF. VrtC is then proposed to catalyze the transfer of a geranyl group synthesized by vrtD to the aromatic C ring of the tetracyclic polyketide intermediate of viridicatumtoxin to yield previridicatumtoxin. Finally, the cytochrome P450 monooxygenase vrtK catalyzes the spirocyclization of the geranyl moiety of previridicatumtoxin to afford viridicatumtoxin. This is Cytochrome P450 monooxygenase vrtK from Penicillium aethiopicum.